The following is a 387-amino-acid chain: Natterin-4 (387 aa).

The signal sequence occupies residues Met-1–Ala-18. The propeptide occupies Glu-19–Gln-46. Over residues Asn-31–Leu-40 the composition is skewed to basic and acidic residues. The interval Asn-31 to Gln-57 is disordered.

Belongs to the natterin family. In terms of processing, contains 4 disulfide bonds. In terms of tissue distribution, expressed by the venom gland.

The protein resides in the secreted. Its activity is regulated as follows. Inhibited by tissue-kallikrein inhibitor TKI and trasylol. Plasma kallikrein inhibitor PKSI527 and classical inhibitors of serine-, metallo-, thiol- or aspartate-peptidases evokes a minor inhibition of the peptide digestion. In terms of biological role, shows nociceptive, edema-inducing and kininogenase activity with release of kallidin from low molecular weight kininogen. The cleavage occurs at Met-Lys bonds. This Thalassophryne nattereri (Copper Joe toadfish) protein is Natterin-4.